The primary structure comprises 335 residues: Nucleoid-associated protein PSEEN4449 (335 aa).

This sequence belongs to the YejK family.

The protein resides in the cytoplasm. It is found in the nucleoid. The chain is Nucleoid-associated protein PSEEN4449 from Pseudomonas entomophila (strain L48).